A 414-amino-acid polypeptide reads, in one-letter code: Putative gustatory receptor 47b (414 aa).

At 1 to 5 (MQRDD) the chain is on the cytoplasmic side. A helical transmembrane segment spans residues 6–26 (GFVYCYGNLYSLLLYWGLVTI). The Extracellular segment spans residues 27 to 40 (RVRSPDRGGAFSNR). A helical transmembrane segment spans residues 41–61 (WTVCYALFTRSFMVICFMATV). The Cytoplasmic portion of the chain corresponds to 62–142 (MTKLRDPEMS…QWNYRRARLK (81 aa)). The helical transmembrane segment at 143-163 (YWYGTVIVGFCFFSFSISLIF) threads the bilayer. The Extracellular portion of the chain corresponds to 164–182 (DTTRCTCGIPSTLLMAFTY). Residues 183-203 (TLLTSSVGLLGFVHIGIMDFI) form a helical membrane-spanning segment. The Cytoplasmic segment spans residues 204-249 (RVRLRLVQQLLHQLYQADDSSEVHERIAYLFEMSKRCSFLLAELNG). The chain crosses the membrane as a helical span at residues 250–270 (VFGFAAAAGIFYDFTIMTCFV). The Extracellular segment spans residues 271–291 (YVICQKLLEREPWDPEYVYML). A helical transmembrane segment spans residues 292-312 (LHVAIHTYKVVITSTYGYLLL). The Cytoplasmic segment spans residues 313 to 364 (REKRNCMHLLSQYSRYFSGQDVARRKTEDFQHWRMHNRQAAMVGSTTLLSVS). The chain crosses the membrane as a helical span at residues 365-385 (TIYLVYNGMANYVIILVQLLF). Residues 386-414 (QQQQIKDHQLTSGKDVDIVGPMGPITHMD) are Extracellular-facing.

This sequence belongs to the insect chemoreceptor superfamily. Gustatory receptor (GR) family. Gr57a subfamily. In terms of tissue distribution, expressed in neurons of the terminal external chemosensory organ of larvae.

The protein resides in the cell membrane. Probable gustatory receptor which mediates acceptance or avoidance behavior, depending on its substrates. The chain is Putative gustatory receptor 47b (Gr47b) from Drosophila melanogaster (Fruit fly).